The following is a 506-amino-acid chain: Ecdysteroid UDP-glucosyltransferase (506 aa).

Positions 1-18 (MTILCWLALLSTLTAVNA) are cleaved as a signal peptide.

It belongs to the UDP-glycosyltransferase family. Glycosylated.

In terms of biological role, catalyzes the transfer of glucose from UDP-glucose to ecdysteroids which are insect molting hormones. Acts on the host at the organismal level to block its development, thereby increasing the yield of progeny virus. This is Ecdysteroid UDP-glucosyltransferase (EGT) from Lepidoptera (butterflies and moths).